Consider the following 360-residue polypeptide: Transcription factor MYB39 (360 aa).

HTH myb-type domains are found at residues 10–62 (DKGV…MNYL) and 63–117 (RPDI…RKKL). DNA-binding regions (H-T-H motif) lie at residues 38–62 (WRSL…MNYL) and 90–113 (WSKI…NTHM). The interval 299 to 324 (PSTGSVSVSPETTSLNHPSTAQHSSG) is disordered.

The protein localises to the nucleus. The sequence is that of Transcription factor MYB39 (MYB39) from Arabidopsis thaliana (Mouse-ear cress).